A 414-amino-acid chain; its full sequence is Serine/threonine transporter SstT (414 aa).

The next 8 helical transmembrane spans lie at 16-36 (GSLV…AWIS), 46-66 (LGTL…LMLV), 84-104 (ILFL…VFSF), 143-163 (ALLN…GFAL), 180-200 (AVTF…FGLV), 219-239 (LVVL…LLVF), 300-320 (MAGA…TLGV), and 332-352 (VVAS…LLLI).

It belongs to the dicarboxylate/amino acid:cation symporter (DAACS) (TC 2.A.23) family.

The protein localises to the cell inner membrane. It carries out the reaction L-serine(in) + Na(+)(in) = L-serine(out) + Na(+)(out). The enzyme catalyses L-threonine(in) + Na(+)(in) = L-threonine(out) + Na(+)(out). In terms of biological role, involved in the import of serine and threonine into the cell, with the concomitant import of sodium (symport system). This is Serine/threonine transporter SstT from Salmonella agona (strain SL483).